Consider the following 289-residue polypeptide: tRNA (adenine(58)-N(1))-methyltransferase catalytic subunit TRMT61A (289 aa).

N-acetylserine is present on Ser-2. Substrate-binding positions include 20–22 (LGH), 35–42 (QTQTRHGV), 64–65 (GW), 85–89 (QILYS), and 110–117 (SGTGSGSV). S-adenosyl-L-methionine contacts are provided by residues Leu-87, 114 to 116 (SGS), Glu-135, Arg-140, 163 to 164 (DV), and Asp-181. Substrate contacts are provided by residues 180–183 (LDIP) and 205–212 (SFSPCIEQ). The interval 245–272 (LPPPDLGTGTDGPAGSDTSPFRSGTPMK) is disordered. Positions 250–259 (LGTGTDGPAG) are enriched in low complexity. A Phosphoserine modification is found at Ser-263. Thr-278 contacts substrate.

Belongs to the class I-like SAM-binding methyltransferase superfamily. TRM61 family. As to quaternary structure, heterotetramer; composed of two copies of TRMT6 and two copies of TRMT61A.

It localises to the nucleus. It catalyses the reaction adenosine(58) in tRNA + S-adenosyl-L-methionine = N(1)-methyladenosine(58) in tRNA + S-adenosyl-L-homocysteine + H(+). The enzyme catalyses an adenosine in mRNA + S-adenosyl-L-methionine = an N(1)-methyladenosine in mRNA + S-adenosyl-L-homocysteine + H(+). Its function is as follows. Catalytic subunit of tRNA (adenine-N(1)-)-methyltransferase, which catalyzes the formation of N(1)-methyladenine at position 58 (m1A58) in initiator methionyl-tRNA. Catalytic subunit of mRNA N(1)-methyltransferase complex, which mediates methylation of adenosine residues at the N(1) position of a small subset of mRNAs: N(1) methylation takes place in tRNA T-loop-like structures of mRNAs and is only present at low stoichiometries. This chain is tRNA (adenine(58)-N(1))-methyltransferase catalytic subunit TRMT61A (TRMT61A), found in Homo sapiens (Human).